The chain runs to 349 residues: Phenylalanine--tRNA ligase alpha subunit (349 aa).

Glu258 serves as a coordination point for Mg(2+).

Belongs to the class-II aminoacyl-tRNA synthetase family. Phe-tRNA synthetase alpha subunit type 1 subfamily. As to quaternary structure, tetramer of two alpha and two beta subunits. Mg(2+) is required as a cofactor.

It localises to the cytoplasm. The enzyme catalyses tRNA(Phe) + L-phenylalanine + ATP = L-phenylalanyl-tRNA(Phe) + AMP + diphosphate + H(+). The polypeptide is Phenylalanine--tRNA ligase alpha subunit (Rickettsia akari (strain Hartford)).